An 88-amino-acid chain; its full sequence is Large ribosomal subunit protein bL27 (88 aa).

Positions 1-13 (MATKKGASSSSNG) are enriched in polar residues. The tract at residues 1–25 (MATKKGASSSSNGRDSEAKRLGVKR) is disordered.

It belongs to the bacterial ribosomal protein bL27 family.

The protein is Large ribosomal subunit protein bL27 of Corynebacterium efficiens (strain DSM 44549 / YS-314 / AJ 12310 / JCM 11189 / NBRC 100395).